The primary structure comprises 635 residues: 1-deoxy-D-xylulose-5-phosphate synthase (635 aa).

Residues H72 and 113-115 (GHA) contribute to the thiamine diphosphate site. D144 is a Mg(2+) binding site. Residues 145–146 (GA), N174, Y287, and E370 contribute to the thiamine diphosphate site. Residue N174 participates in Mg(2+) binding.

The protein belongs to the transketolase family. DXPS subfamily. As to quaternary structure, homodimer. The cofactor is Mg(2+). Thiamine diphosphate is required as a cofactor.

It catalyses the reaction D-glyceraldehyde 3-phosphate + pyruvate + H(+) = 1-deoxy-D-xylulose 5-phosphate + CO2. The protein operates within metabolic intermediate biosynthesis; 1-deoxy-D-xylulose 5-phosphate biosynthesis; 1-deoxy-D-xylulose 5-phosphate from D-glyceraldehyde 3-phosphate and pyruvate: step 1/1. Its function is as follows. Catalyzes the acyloin condensation reaction between C atoms 2 and 3 of pyruvate and glyceraldehyde 3-phosphate to yield 1-deoxy-D-xylulose-5-phosphate (DXP). This Trichormus variabilis (strain ATCC 29413 / PCC 7937) (Anabaena variabilis) protein is 1-deoxy-D-xylulose-5-phosphate synthase.